A 151-amino-acid chain; its full sequence is Ribosome maturation factor RimP (151 aa).

Belongs to the RimP family.

It is found in the cytoplasm. In terms of biological role, required for maturation of 30S ribosomal subunits. The sequence is that of Ribosome maturation factor RimP from Shewanella sp. (strain ANA-3).